Consider the following 609-residue polypeptide: Proteasome-associated ATPase (609 aa).

The tract at residues 1–24 (MGESERSEAFGIPRDSPLSSGDAA) is disordered. Positions 20-96 (SGDAAELEQL…LREEVDRLGQ (77 aa)) form a coiled coil. 296 to 301 (GCGKTL) contributes to the ATP binding site. The tract at residues 608 to 609 (YL) is docks into pockets in the proteasome alpha-ring.

This sequence belongs to the AAA ATPase family. As to quaternary structure, homohexamer. Assembles into a hexameric ring structure that caps the 20S proteasome core. Strongly interacts with the prokaryotic ubiquitin-like protein Pup through a hydrophobic interface; the interacting region of ARC lies in its N-terminal coiled-coil domain. There is one Pup binding site per ARC hexamer ring. Upon ATP-binding, the C-terminus of ARC interacts with the alpha-rings of the proteasome core, possibly by binding to the intersubunit pockets.

It participates in protein degradation; proteasomal Pup-dependent pathway. In terms of biological role, ATPase which is responsible for recognizing, binding, unfolding and translocation of pupylated proteins into the bacterial 20S proteasome core particle. May be essential for opening the gate of the 20S proteasome via an interaction with its C-terminus, thereby allowing substrate entry and access to the site of proteolysis. Thus, the C-termini of the proteasomal ATPase may function like a 'key in a lock' to induce gate opening and therefore regulate proteolysis. This chain is Proteasome-associated ATPase, found in Mycobacterium bovis (strain BCG / Pasteur 1173P2).